The sequence spans 321 residues: Glycolipid transfer protein domain-containing protein 2 (321 aa).

This sequence belongs to the GLTP family.

The protein is Glycolipid transfer protein domain-containing protein 2 (Gltpd2) of Mus musculus (Mouse).